Consider the following 310-residue polypeptide: Protein DOS2 (310 aa).

2 stretches are compositionally biased toward basic and acidic residues: residues D15–G26 and S135–E146. 2 disordered regions span residues D15 to E45 and A131 to G151. In terms of domain architecture, BSD spans Q176–L228. Residues K240–E310 are disordered. The span at E247–K263 shows a compositional bias: acidic residues. 2 stretches are compositionally biased toward basic and acidic residues: residues V264 to T276 and G284 to S300. A compositionally biased stretch (acidic residues) spans K301–E310.

Its function is as follows. Acts in ubiquitin metabolism and is necessary for the control of single-copy DNA replication. This chain is Protein DOS2 (DOS2), found in Saccharomyces cerevisiae (strain ATCC 204508 / S288c) (Baker's yeast).